We begin with the raw amino-acid sequence, 193 residues long: dCTP deaminase (193 aa).

Residues arginine 110–arginine 115, aspartate 128, valine 136–glutamate 138, tyrosine 171, lysine 178, and glutamine 182 each bind dCTP. The active-site Proton donor/acceptor is the glutamate 138. Residues arginine 169–aspartate 193 form a disordered region.

The protein belongs to the dCTP deaminase family. Homotrimer.

It catalyses the reaction dCTP + H2O + H(+) = dUTP + NH4(+). It participates in pyrimidine metabolism; dUMP biosynthesis; dUMP from dCTP (dUTP route): step 1/2. Functionally, catalyzes the deamination of dCTP to dUTP. This is dCTP deaminase from Salmonella arizonae (strain ATCC BAA-731 / CDC346-86 / RSK2980).